A 33-amino-acid polypeptide reads, in one-letter code: Cytochrome b6-f complex subunit 8 (33 aa).

A helical membrane pass occupies residues 2-22 (LISLGWAALAATFTFSIAMVV).

Belongs to the PetN family. As to quaternary structure, the 4 large subunits of the cytochrome b6-f complex are cytochrome b6, subunit IV (17 kDa polypeptide, PetD), cytochrome f and the Rieske protein, while the 4 small subunits are PetG, PetL, PetM and PetN. The complex functions as a dimer.

It is found in the cellular thylakoid membrane. In terms of biological role, component of the cytochrome b6-f complex, which mediates electron transfer between photosystem II (PSII) and photosystem I (PSI), cyclic electron flow around PSI, and state transitions. This is Cytochrome b6-f complex subunit 8 from Synechococcus sp. (strain RCC307).